A 117-amino-acid chain; its full sequence is DNA-directed RNA polymerase II subunit RPB11 (117 aa).

It belongs to the archaeal Rpo11/eukaryotic RPB11/RPC19 RNA polymerase subunit family. In terms of assembly, component of the RNA polymerase II (Pol II) complex consisting of 12 subunits.

It localises to the nucleus. Functionally, DNA-dependent RNA polymerase catalyzes the transcription of DNA into RNA using the four ribonucleoside triphosphates as substrates. Component of RNA polymerase II which synthesizes mRNA precursors and many functional non-coding RNAs. Pol II is the central component of the basal RNA polymerase II transcription machinery. It is composed of mobile elements that move relative to each other. RPB11 is part of the core element with the central large cleft. The protein is DNA-directed RNA polymerase II subunit RPB11 of Drosophila melanogaster (Fruit fly).